Here is a 206-residue protein sequence, read N- to C-terminus: MTQKNGPLRIGIGGPVGSGKTTLTEKLCKALRDKYSVAVITNDIYTQEDALILARSQALSEDRIMGVETGGCPHTAIREDASINLQAIAEMNRRFPDLEIVFIESGGDNLAATFSPDLADLTLYVISVCQGEEIPRKGGPGITRSDFLVINKSDLAPHVHVDLDIMQGDAARMRGKRPFGFTDLHRGKGVPEIIDFIVENGGLEAR.

G14–T21 contacts GTP.

This sequence belongs to the SIMIBI class G3E GTPase family. UreG subfamily. As to quaternary structure, homodimer. UreD, UreF and UreG form a complex that acts as a GTP-hydrolysis-dependent molecular chaperone, activating the urease apoprotein by helping to assemble the nickel containing metallocenter of UreC. The UreE protein probably delivers the nickel.

The protein resides in the cytoplasm. Facilitates the functional incorporation of the urease nickel metallocenter. This process requires GTP hydrolysis, probably effectuated by UreG. The sequence is that of Urease accessory protein UreG from Brucella anthropi (strain ATCC 49188 / DSM 6882 / CCUG 24695 / JCM 21032 / LMG 3331 / NBRC 15819 / NCTC 12168 / Alc 37) (Ochrobactrum anthropi).